The chain runs to 427 residues: tRNA(Ile)-lysidine synthase (427 aa).

25 to 30 (SGGLDS) lines the ATP pocket.

It belongs to the tRNA(Ile)-lysidine synthase family.

It localises to the cytoplasm. It catalyses the reaction cytidine(34) in tRNA(Ile2) + L-lysine + ATP = lysidine(34) in tRNA(Ile2) + AMP + diphosphate + H(+). Ligates lysine onto the cytidine present at position 34 of the AUA codon-specific tRNA(Ile) that contains the anticodon CAU, in an ATP-dependent manner. Cytidine is converted to lysidine, thus changing the amino acid specificity of the tRNA from methionine to isoleucine. This Histophilus somni (strain 129Pt) (Haemophilus somnus) protein is tRNA(Ile)-lysidine synthase.